The chain runs to 933 residues: 2-oxoglutarate dehydrogenase E1 component (933 aa).

The protein belongs to the alpha-ketoglutarate dehydrogenase family. As to quaternary structure, homodimer. Part of the 2-oxoglutarate dehydrogenase (OGDH) complex composed of E1 (2-oxoglutarate dehydrogenase), E2 (dihydrolipoamide succinyltransferase) and E3 (dihydrolipoamide dehydrogenase); the complex contains multiple copies of the three enzymatic components (E1, E2 and E3). Thiamine diphosphate is required as a cofactor.

It carries out the reaction N(6)-[(R)-lipoyl]-L-lysyl-[protein] + 2-oxoglutarate + H(+) = N(6)-[(R)-S(8)-succinyldihydrolipoyl]-L-lysyl-[protein] + CO2. Functionally, E1 component of the 2-oxoglutarate dehydrogenase (OGDH) complex which catalyzes the decarboxylation of 2-oxoglutarate, the first step in the conversion of 2-oxoglutarate to succinyl-CoA and CO(2). The sequence is that of 2-oxoglutarate dehydrogenase E1 component (sucA) from Rickettsia typhi (strain ATCC VR-144 / Wilmington).